Reading from the N-terminus, the 322-residue chain is Arginase-1 (322 aa).

Lys17 bears the N6-succinyllysine mark. Phosphoserine is present on residues Ser62 and Ser72. Lys75 carries the post-translational modification N6-succinyllysine. The Mn(2+) site is built by His101, Asp124, His126, and Asp128. Substrate is bound by residues 126 to 130 (HTDIN) and 137 to 139 (SGN). At Ser163 the chain carries Phosphoserine. Position 183 (Asp183) interacts with substrate. Ser217 carries the post-translational modification Phosphoserine. The Mn(2+) site is built by Asp232 and Asp234. Thr246 and Glu277 together coordinate substrate.

It belongs to the arginase family. Homotrimer. Interacts with CMTM6. Mn(2+) is required as a cofactor. As to expression, within the immune system initially reported to be selectively expressed in granulocytes (polymorphonuclear leukocytes [PMNs]). Also detected in macrophages mycobacterial granulomas. Expressed in group2 innate lymphoid cells (ILC2s) during lung disease.

Its subcellular location is the cytoplasm. The protein resides in the cytoplasmic granule. It catalyses the reaction L-arginine + H2O = urea + L-ornithine. It functions in the pathway nitrogen metabolism; urea cycle; L-ornithine and urea from L-arginine: step 1/1. Functionally, key element of the urea cycle converting L-arginine to urea and L-ornithine, which is further metabolized into metabolites proline and polyamides that drive collagen synthesis and bioenergetic pathways critical for cell proliferation, respectively; the urea cycle takes place primarily in the liver and, to a lesser extent, in the kidneys. In terms of biological role, functions in L-arginine homeostasis in nonhepatic tissues characterized by the competition between nitric oxide synthase (NOS) and arginase for the available intracellular substrate arginine. Arginine metabolism is a critical regulator of innate and adaptive immune responses. Involved in an antimicrobial effector pathway in polymorphonuclear granulocytes (PMN). Upon PMN cell death is liberated from the phagolysosome and depletes arginine in the microenvironment leading to suppressed T cell and natural killer (NK) cell proliferation and cytokine secretion. In group 2 innate lymphoid cells (ILC2s) promotes acute type 2 inflammation in the lung and is involved in optimal ILC2 proliferation but not survival. In humans, the immunological role in the monocytic/macrophage/dendritic cell (DC) lineage is unsure. In Homo sapiens (Human), this protein is Arginase-1 (ARG1).